Here is a 409-residue protein sequence, read N- to C-terminus: Endoglucanase B (409 aa).

Residues histidine 61, 65 to 66 (WY), tyrosine 92, and histidine 127 each bind substrate. Glutamate 165 (proton donor) is an active-site residue. Substrate is bound at residue tyrosine 228. Catalysis depends on glutamate 254, which acts as the Nucleophile. Substrate contacts are provided by residues 260 to 261 (AT), tryptophan 288, and 293 to 295 (KDE). Residues 326–372 (IRESATTPPSDPTPPSDPDPGEPEPDPGEPDPTPPSDPGDYPAWDPN) are disordered. Residues 334 to 343 (PSDPTPPSDP) show a composition bias toward pro residues. Over residues 344-354 (DPGEPEPDPGE) the composition is skewed to acidic residues.

The protein belongs to the glycosyl hydrolase 5 (cellulase A) family.

It carries out the reaction Endohydrolysis of (1-&gt;4)-beta-D-glucosidic linkages in cellulose, lichenin and cereal beta-D-glucans.. This chain is Endoglucanase B (celB), found in Evansella cellulosilytica (strain ATCC 21833 / DSM 2522 / FERM P-1141 / JCM 9156 / N-4) (Bacillus cellulosilyticus).